Here is a 488-residue protein sequence, read N- to C-terminus: Probable malate:quinone oxidoreductase (488 aa).

It belongs to the MQO family. FAD serves as cofactor.

The enzyme catalyses (S)-malate + a quinone = a quinol + oxaloacetate. Its pathway is carbohydrate metabolism; tricarboxylic acid cycle; oxaloacetate from (S)-malate (quinone route): step 1/1. The polypeptide is Probable malate:quinone oxidoreductase (Neisseria meningitidis serogroup B (strain ATCC BAA-335 / MC58)).